Reading from the N-terminus, the 170-residue chain is Large ribosomal subunit protein uL11 (170 aa).

The protein belongs to the universal ribosomal protein uL11 family. Part of the ribosomal stalk of the 50S ribosomal subunit. Interacts with L10 and the large rRNA to form the base of the stalk. L10 forms an elongated spine to which L12 dimers bind in a sequential fashion forming a multimeric L10(L12)X complex.

In terms of biological role, forms part of the ribosomal stalk which helps the ribosome interact with GTP-bound translation factors. This Desulfurococcus amylolyticus (strain DSM 18924 / JCM 16383 / VKM B-2413 / 1221n) (Desulfurococcus kamchatkensis) protein is Large ribosomal subunit protein uL11.